The sequence spans 202 residues: NADH-quinone oxidoreductase subunit B (202 aa).

Residues Cys81, Cys82, Cys146, and Cys176 each coordinate [4Fe-4S] cluster.

It belongs to the complex I 20 kDa subunit family. As to quaternary structure, NDH-1 is composed of 14 different subunits. Subunits NuoB, C, D, E, F, and G constitute the peripheral sector of the complex. [4Fe-4S] cluster is required as a cofactor.

The protein resides in the cell inner membrane. The enzyme catalyses a quinone + NADH + 5 H(+)(in) = a quinol + NAD(+) + 4 H(+)(out). Its function is as follows. NDH-1 shuttles electrons from NADH, via FMN and iron-sulfur (Fe-S) centers, to quinones in the respiratory chain. The immediate electron acceptor for the enzyme in this species is believed to be ubiquinone. Couples the redox reaction to proton translocation (for every two electrons transferred, four hydrogen ions are translocated across the cytoplasmic membrane), and thus conserves the redox energy in a proton gradient. The chain is NADH-quinone oxidoreductase subunit B from Bradyrhizobium diazoefficiens (strain JCM 10833 / BCRC 13528 / IAM 13628 / NBRC 14792 / USDA 110).